The sequence spans 173 residues: MKATSKAKTHPPGATAAKDPQKQVIIYTDGACLGNPGPGGYGVVLLYGEHRKELSGGYRLTTNNRMEILAAIKGLEALKSACSVTLYSDSQYLVNAINKGWAQRWKANGWKRNAREKALNPDLWERLLELCSRHDITFVWVRGHANNKENERCDVLSKEAAGRADLKADPGYP.

A disordered region spans residues 1 to 20; it reads MKATSKAKTHPPGATAAKDP. The RNase H type-1 domain maps to 20–162; it reads PQKQVIIYTD…CDVLSKEAAG (143 aa). Mg(2+)-binding residues include Asp29, Glu67, Asp89, and Asp154.

It belongs to the RNase H family. Monomer. Mg(2+) serves as cofactor.

The protein localises to the cytoplasm. It catalyses the reaction Endonucleolytic cleavage to 5'-phosphomonoester.. In terms of biological role, endonuclease that specifically degrades the RNA of RNA-DNA hybrids. The chain is Ribonuclease H from Syntrophus aciditrophicus (strain SB).